Here is a 134-residue protein sequence, read N- to C-terminus: ATP synthase epsilon chain (134 aa).

This sequence belongs to the ATPase epsilon chain family. As to quaternary structure, F-type ATPases have 2 components, CF(1) - the catalytic core - and CF(0) - the membrane proton channel. CF(1) has five subunits: alpha(3), beta(3), gamma(1), delta(1), epsilon(1). CF(0) has three main subunits: a, b and c.

The protein resides in the cell inner membrane. Produces ATP from ADP in the presence of a proton gradient across the membrane. In Rhodospirillum rubrum (strain ATCC 11170 / ATH 1.1.1 / DSM 467 / LMG 4362 / NCIMB 8255 / S1), this protein is ATP synthase epsilon chain.